Consider the following 191-residue polypeptide: Potassium-transporting ATPase KdpC subunit (191 aa).

A helical transmembrane segment spans residues 6–26 (PAILLFILLTLVTGGLYPLLT).

The protein belongs to the KdpC family. As to quaternary structure, the system is composed of three essential subunits: KdpA, KdpB and KdpC.

It is found in the cell inner membrane. Part of the high-affinity ATP-driven potassium transport (or Kdp) system, which catalyzes the hydrolysis of ATP coupled with the electrogenic transport of potassium into the cytoplasm. This subunit acts as a catalytic chaperone that increases the ATP-binding affinity of the ATP-hydrolyzing subunit KdpB by the formation of a transient KdpB/KdpC/ATP ternary complex. This is Potassium-transporting ATPase KdpC subunit from Enterobacter sp. (strain 638).